Here is a 324-residue protein sequence, read N- to C-terminus: Ferrochelatase (324 aa).

Residues His197 and Glu278 each contribute to the Fe cation site.

The protein belongs to the ferrochelatase family.

The protein localises to the cytoplasm. It carries out the reaction heme b + 2 H(+) = protoporphyrin IX + Fe(2+). It participates in porphyrin-containing compound metabolism; protoheme biosynthesis; protoheme from protoporphyrin-IX: step 1/1. Its function is as follows. Catalyzes the ferrous insertion into protoporphyrin IX. This is Ferrochelatase from Aeromonas hydrophila subsp. hydrophila (strain ATCC 7966 / DSM 30187 / BCRC 13018 / CCUG 14551 / JCM 1027 / KCTC 2358 / NCIMB 9240 / NCTC 8049).